Consider the following 211-residue polypeptide: Thymidylate kinase (211 aa).

Residue Gly11–Thr18 participates in ATP binding.

This sequence belongs to the thymidylate kinase family.

It carries out the reaction dTMP + ATP = dTDP + ADP. Phosphorylation of dTMP to form dTDP in both de novo and salvage pathways of dTTP synthesis. In Streptococcus pyogenes serotype M6 (strain ATCC BAA-946 / MGAS10394), this protein is Thymidylate kinase.